Consider the following 485-residue polypeptide: Protein DETOXIFICATION 8 (485 aa).

The disordered stretch occupies residues 1–26 (MENGFSLVPKEEEEEEDYSNEKSEDQ). 12 helical membrane-spanning segments follow: residues 41 to 61 (FMAA…VISI), 74 to 94 (AVAI…FGLA), 118 to 138 (YGSM…WVFM), 159 to 179 (SIWL…TRFF), 188 to 208 (LFLS…LLVY), 212 to 232 (FGIV…VGLL), 263 to 283 (LAIP…LLIL), 297 to 317 (VLSI…AIGA), 338 to 358 (AANS…ISLY), 381 to 401 (ITPF…LSGV), 414 to 434 (ANIG…CFVV), and 442 to 462 (WIGI…VTFF).

The protein belongs to the multi antimicrobial extrusion (MATE) (TC 2.A.66.1) family.

It localises to the membrane. In Arabidopsis thaliana (Mouse-ear cress), this protein is Protein DETOXIFICATION 8.